The following is a 187-amino-acid chain: Photosystem I assembly protein Ycf4 (187 aa).

A run of 2 helical transmembrane segments spans residues 21–43 (LSNYWWAITIGLGSSGFILAGIS) and 69–91 (LLYGTIGFLLDIYLWLLILWNVG).

The protein belongs to the Ycf4 family.

Its subcellular location is the plastid. It is found in the cyanelle thylakoid membrane. Seems to be required for the assembly of the photosystem I complex. This Cyanophora paradoxa protein is Photosystem I assembly protein Ycf4.